The chain runs to 173 residues: Alpha-crystallin A chain (173 aa).

Methionine 1 is subject to N-acetylmethionine. The 112-residue stretch at asparagine 53–aspartate 164 folds into the sHSP domain. 3 residues coordinate Zn(2+): histidine 101, glutamate 103, and histidine 108. Residues cysteine 132 and cysteine 143 are joined by a disulfide bond. Residues cysteine 143 to serine 173 are disordered. Residues glycine 153–threonine 167 show a composition bias toward basic and acidic residues.

This sequence belongs to the small heat shock protein (HSP20) family. Heteropolymer composed of three CRYAA and one CRYAB subunits. Inter-subunit bridging via zinc ions enhances stability, which is crucial as there is no protein turn over in the lens. Zinc coordination is achieved at least by His-101, Glu-103 and His-108. His-101 and Glu-103 come from the same molecule within the oligomer, while His-108 residue is provided by another molecule. Can also form homodimers and homotetramers (dimers of dimers) which serve as the building blocks of homooligomers. Part of a complex required for lens intermediate filament formation composed of BFSP1, BFSP2 and CRYAA.

The protein resides in the cytoplasm. It localises to the nucleus. Its function is as follows. Contributes to the transparency and refractive index of the lens. May act as a chaperone, preventing aggregation of various proteins under a wide range of stress conditions. The sequence is that of Alpha-crystallin A chain (cryaa) from Psalidodon fasciatus (Banded astyanax).